The primary structure comprises 623 residues: Membralin-like protein At1g60995 (623 aa).

A helical membrane pass occupies residues 24 to 44; the sequence is GFLEYTYLFVAITLFCILVVM. Residues 99-119 are disordered; sequence SLEVSKTDQESSTSEENTDDT. A run of 4 helical transmembrane segments spans residues 315–335, 363–383, 392–412, and 424–444; these read GVLM…SFTL, IFVH…ILFF, LLAF…LISV, and FFLL…YGFS. Disordered regions lie at residues 506–567 and 602–623; these read NRTT…QAGA and EAQV…LSVD. The segment covering 514 to 531 has biased composition (polar residues); sequence PSGPNHTTPNQNTETRSF.

It belongs to the membralin family.

The protein localises to the membrane. In Arabidopsis thaliana (Mouse-ear cress), this protein is Membralin-like protein At1g60995.